The sequence spans 309 residues: Taste receptor type 2 member 105 (309 aa).

Over 1–9 the chain is Extracellular; it reads MLSAAEGIL. A helical membrane pass occupies residues 10 to 32; sequence LSIATVEAGLGVLGNTFIALVNC. Topologically, residues 33–44 are cytoplasmic; that stretch reads MDWAKNKKLSKI. The chain crosses the membrane as a helical span at residues 45-67; sequence GFLLFGLATSRIFIVWILILDAY. At 68–86 the chain is on the extracellular side; sequence AKLFFPGKYLSKSLTEIIS. The chain crosses the membrane as a helical span at residues 87 to 109; that stretch reads CIWMTVNHMTVWFATSLSIFYFL. The Cytoplasmic segment spans residues 110 to 129; sequence KIANFSHYIFLWLKRRTDKV. A helical membrane pass occupies residues 130–149; sequence FAFLLWCLLISWAISFSFTV. Residues 150–177 are Extracellular-facing; it reads KVMKSNPKNHGNRTSGTHWEKREFTSNY. Asparagine 161 carries an N-linked (GlcNAc...) asparagine glycan. A helical transmembrane segment spans residues 178–200; sequence VLINIGVISLLIMTLTACFLLII. The Cytoplasmic portion of the chain corresponds to 201–226; that stretch reads SLWKHSRQMQSNVSGFRDLNTEAHVK. Residues 227 to 249 form a helical membrane-spanning segment; that stretch reads AIKFLISFIILFILYFIGVAVEI. The Extracellular segment spans residues 250-258; sequence ICMFIPENK. A helical transmembrane segment spans residues 259 to 281; sequence LLFIFGLTTASVYPCCHSVILIL. The Cytoplasmic portion of the chain corresponds to 282–309; that stretch reads TNSQLKQAFVKVLEGLKFSENGKDLRAT.

It belongs to the G-protein coupled receptor T2R family. In terms of tissue distribution, expressed in subsets of taste receptor cells of the tongue and palate epithelium and exclusively in gustducin-positive cells. Expressed in 15% taste bud cells in circumvallate and foliate papillae but only in 2% in fungiform papillae. Expressed in the duodenum, antrum and fundus (part of the stomach).

It localises to the membrane. In terms of biological role, gustducin-coupled cycloheximide receptor implicated in the perception of bitter compounds in the oral cavity and the gastrointestinal tract. Signals through PLCB2 and the calcium-regulated cation channel TRPM5. This Rattus norvegicus (Rat) protein is Taste receptor type 2 member 105 (Tas2r105).